Here is a 284-residue protein sequence, read N- to C-terminus: Aspartate dehydrogenase domain-containing protein (284 aa).

The protein belongs to the L-aspartate dehydrogenase family.

The chain is Aspartate dehydrogenase domain-containing protein (aspdh) from Xenopus tropicalis (Western clawed frog).